The chain runs to 207 residues: Uracil phosphoribosyltransferase (207 aa).

Residues R77, R102, and 129-137 (DPMLATGGS) contribute to the 5-phospho-alpha-D-ribose 1-diphosphate site. Uracil contacts are provided by residues I192 and 197–199 (GDA). A 5-phospho-alpha-D-ribose 1-diphosphate-binding site is contributed by D198.

Belongs to the UPRTase family. It depends on Mg(2+) as a cofactor.

It carries out the reaction UMP + diphosphate = 5-phospho-alpha-D-ribose 1-diphosphate + uracil. It participates in pyrimidine metabolism; UMP biosynthesis via salvage pathway; UMP from uracil: step 1/1. Allosterically activated by GTP. Functionally, catalyzes the conversion of uracil and 5-phospho-alpha-D-ribose 1-diphosphate (PRPP) to UMP and diphosphate. This Mycoplasma mobile (strain ATCC 43663 / 163K / NCTC 11711) (Mesomycoplasma mobile) protein is Uracil phosphoribosyltransferase.